We begin with the raw amino-acid sequence, 113 residues long: UPF0212 protein MmarC6_1165 (113 aa).

It belongs to the UPF0212 family.

The sequence is that of UPF0212 protein MmarC6_1165 from Methanococcus maripaludis (strain C6 / ATCC BAA-1332).